We begin with the raw amino-acid sequence, 94 residues long: Large ribosomal subunit protein eL37 (94 aa).

Positions 19, 22, 34, and 37 each coordinate Zn(2+). A C4-type zinc finger spans residues 19 to 37 (CRRCGKATYHKQKLRCAAC).

This sequence belongs to the eukaryotic ribosomal protein eL37 family. The cofactor is Zn(2+).

The protein resides in the cytoplasm. In terms of biological role, binds to the 23S rRNA. This Tetrahymena thermophila (strain SB210) protein is Large ribosomal subunit protein eL37 (RPL37).